A 648-amino-acid polypeptide reads, in one-letter code: Replication restart protein PriA (648 aa).

The 167-residue stretch at 131–297 (TILNESNKPT…KTHKYQLVTL (167 aa)) folds into the Helicase ATP-binding domain. Position 144–151 (144–151 (GVTGSGKT)) interacts with ATP. A DEAH box motif is present at residues 240-243 (DEEH). Positions 358, 361, 367, 370, 385, 388, 398, and 401 each coordinate Zn(2+). Residues 375 to 548 (VLHKATKKLE…RFFTNELEIR (174 aa)) form the Helicase C-terminal domain.

This sequence belongs to the helicase family. PriA subfamily. In terms of assembly, component of the replication restart primosome. Zn(2+) serves as cofactor.

The catalysed reaction is Couples ATP hydrolysis with the unwinding of duplex DNA by translocating in the 3'-5' direction.. The enzyme catalyses ATP + H2O = ADP + phosphate + H(+). In terms of biological role, initiates the restart of stalled replication forks, which reloads the replicative helicase on sites other than the origin of replication. Recognizes and binds to abandoned replication forks and remodels them to uncover a helicase loading site. Promotes assembly of the primosome at these replication forks. The polypeptide is Replication restart protein PriA (Rickettsia prowazekii (strain Madrid E)).